The following is a 235-amino-acid chain: Large ribosomal subunit protein uL4 (235 aa).

Residues 45 to 75 (RAGTASTKTRGEVSGGGRKPWPQKHTGRARH) are disordered. Residues 65 to 75 (WPQKHTGRARH) are compositionally biased toward basic residues.

The protein belongs to the universal ribosomal protein uL4 family. As to quaternary structure, part of the 50S ribosomal subunit.

In terms of biological role, one of the primary rRNA binding proteins, this protein initially binds near the 5'-end of the 23S rRNA. It is important during the early stages of 50S assembly. It makes multiple contacts with different domains of the 23S rRNA in the assembled 50S subunit and ribosome. Functionally, this protein only weakly controls expression of the E.coli S10 operon. It is incorporated into E.coli ribosomes, however it is not as firmly associated as the endogenous protein. Forms part of the polypeptide exit tunnel. This Thermotoga maritima (strain ATCC 43589 / DSM 3109 / JCM 10099 / NBRC 100826 / MSB8) protein is Large ribosomal subunit protein uL4 (rplD).